A 206-amino-acid polypeptide reads, in one-letter code: Ribosomal RNA small subunit methyltransferase G (206 aa).

Residues G74, L79, 125 to 126 (VE), and R140 contribute to the S-adenosyl-L-methionine site.

Belongs to the methyltransferase superfamily. RNA methyltransferase RsmG family.

The protein localises to the cytoplasm. The enzyme catalyses guanosine(527) in 16S rRNA + S-adenosyl-L-methionine = N(7)-methylguanosine(527) in 16S rRNA + S-adenosyl-L-homocysteine. Specifically methylates the N7 position of guanine in position 527 of 16S rRNA. The chain is Ribosomal RNA small subunit methyltransferase G from Shewanella putrefaciens (strain CN-32 / ATCC BAA-453).